A 400-amino-acid polypeptide reads, in one-letter code: Acetate kinase (400 aa).

Mg(2+) is bound at residue Asn-10. An ATP-binding site is contributed by Lys-17. Residue Arg-91 participates in substrate binding. Residue Asp-150 is the Proton donor/acceptor of the active site. Residues 210-214, 285-287, and 333-337 each bind ATP; these read HLGNG, DCR, and GIGEN. Glu-387 contacts Mg(2+).

It belongs to the acetokinase family. As to quaternary structure, homodimer. It depends on Mg(2+) as a cofactor. Mn(2+) is required as a cofactor.

The protein resides in the cytoplasm. It carries out the reaction acetate + ATP = acetyl phosphate + ADP. The protein operates within metabolic intermediate biosynthesis; acetyl-CoA biosynthesis; acetyl-CoA from acetate: step 1/2. Its function is as follows. Catalyzes the formation of acetyl phosphate from acetate and ATP. Can also catalyze the reverse reaction. This chain is Acetate kinase, found in Yersinia pestis bv. Antiqua (strain Antiqua).